Here is a 352-residue protein sequence, read N- to C-terminus: SNF1-related protein kinase regulatory subunit gamma-like PV42a (352 aa).

4 consecutive CBS domains span residues 24 to 106 (RNRR…LSDL), 122 to 196 (LEGL…FDDL), 210 to 281 (VNDS…ELQT), and 297 to 352 (KERE…STLS).

It belongs to the 5'-AMP-activated protein kinase gamma subunit family. In terms of tissue distribution, expressed highly in rosette leaves, cauline leaves, open flowers, developing siliques and dry seeds, but at a low level in stems and floral buds.

In terms of biological role, plays redundant role with PV42b in regulating male gametogenesis and pollen tube guidance. In Arabidopsis thaliana (Mouse-ear cress), this protein is SNF1-related protein kinase regulatory subunit gamma-like PV42a (PV42A).